Reading from the N-terminus, the 256-residue chain is Small ribosomal subunit protein uS2 (256 aa).

Belongs to the universal ribosomal protein uS2 family.

The chain is Small ribosomal subunit protein uS2 from Rhizobium rhizogenes (strain K84 / ATCC BAA-868) (Agrobacterium radiobacter).